A 230-amino-acid polypeptide reads, in one-letter code: MDEVAIKDEFYRLIPSRFPPVAVYEGLVSEDKIEALVEIENKTNPRLQSEGRLLSAHTDPRAPRLQNWNLAPFKYLNPEGIRFFDGSRPALELADDRQTALAMSVERRQAFLSRTKEAPIGLDMRLLKTPVSGRFIDFRKYPIDLSCEERWRLGGSVPEGADGVIYHPPERPSAICIAVLRGDVLGRTIQTVHYRYVWNGTRISLLYAFDDAGNEIRPEVLGGADDAFAV.

This is an uncharacterized protein from Sinorhizobium fredii (strain NBRC 101917 / NGR234).